The primary structure comprises 135 residues: Small ribosomal subunit protein uS12 (135 aa).

Asp89 carries the 3-methylthioaspartic acid modification. The tract at residues 103-135 is disordered; sequence DTAGVKNRMQSRSKYGTKRPKPGQAAAPAGKKR. The segment covering 111–123 has biased composition (basic residues); the sequence is MQSRSKYGTKRPK. The segment covering 124–135 has biased composition (low complexity); the sequence is PGQAAAPAGKKR.

The protein belongs to the universal ribosomal protein uS12 family. As to quaternary structure, part of the 30S ribosomal subunit. Contacts proteins S8 and S17. May interact with IF1 in the 30S initiation complex.

In terms of biological role, with S4 and S5 plays an important role in translational accuracy. Functionally, interacts with and stabilizes bases of the 16S rRNA that are involved in tRNA selection in the A site and with the mRNA backbone. Located at the interface of the 30S and 50S subunits, it traverses the body of the 30S subunit contacting proteins on the other side and probably holding the rRNA structure together. The combined cluster of proteins S8, S12 and S17 appears to hold together the shoulder and platform of the 30S subunit. This chain is Small ribosomal subunit protein uS12, found in Gloeobacter violaceus (strain ATCC 29082 / PCC 7421).